The primary structure comprises 2175 residues: MGAQLSRNTAGSHTTGTYATGGSTINYNNINYYSHAASAAQNKQDFTQDPSKFTQPIADVIKETAVPLKSPSAEACGYSDRVAQLTLGNSTITTQEAANICVAYGCWPAKLSDTDATSVDKPTEPGVSADAFYTLRSKPWQADSKGWYWKLPDALNNTGMFGQNAQFHYIYRGGWAVHVQCNATKFHQGTLLVLAIPEHQIATQEQPAFDRTMPGSEGGTFQEPFWLEDGTSLGNSLIYPHQWINLRTNNSATLILPYVNAIPMDSAIRHSNWTLAIIPVAPLKYAAETTPLVPITVTIAPMETEYNGLRRAIASNQGLPTKPGPGSYQFMTTDEDCSPCILPDFQPTLEIFIPGKVNNLLEIAQVESILEANNREGVEGVERYVIPVSVQDALDAQIYALRLELGGSGPLSSSLLGTLAKHYTQWSGSVEITCMFTGTFMTTGKVLLAYTPPGGDMPRNREEAMLGTHVVWDFGLQSSITLVIPWISASHFRGVSNDDVLNYQYYAAGHVTIWYQTNMVIPPGFPNTAGIIMMIAAQPNFSFRIQKDREDMTQTAILQNDPGKMLKDAIDKQVAGALVAGTTTSTHSVATDSTPALQAAETGATSTARDESMIETRTIVPTHGIHETSVESFFGRSSLVGMPLLATGTSITNWRIDFREFVQLRAKMSWFTYMRFDVEFTIIATSSTGQNVTTEQHTTYQVMYVPPGAPVPSNQDSFQWQSGCNPSVFADTDGPPAQFSVPFMSSANAYSTVYDGYARFMDTDPDRYGILPSNFLGFMYFRTLEDAAHQVRFRICAKIKHTSCWIPRAPRQAPYKKRYNLVFSGDSDRICSNRASLTSYGPFGQQQGAAYVGSYKILNRHLATYADWENEVWQSYQRDLLVTRVDAHGCDTIARCNCRSGIYYCKSTAKHYPIVVTPPSIYKIEANDYYPERMQTHILLGIGFAEPGDCGGLLRCEHGVMGILTVGGGDHVGFADVRDLLWIEDDAMEQGITDYVQQLGNAFGAGFTAEIANYTNQLRDMLMGSDSVVEKIIRSLVRLVSALVIVVRNHQDLITVGATLALLGCEGSPWKWLKRKVCQILGINMAERQSDNWMKKFTEMCNAFRGLDWIAAKISKFIDWLKQKILPELKERAEFVKKLKQLPLLEAQVNTLEHSSASQERQEQLFGNVQYLAHHCRKNAPLYAAEAKRVYHLEKRVLGAMQFKTKNRIEPVCALIHGSPGTGQSLATMIVGRKLAEYEGSDVYSLPPDPDHFDGYQQQAVVVMDDLLQNPDGKDMTLFCQMVSTAPFTVPMAALEDKGKLFTSKFVLASTNAGQVTPPTVADYKALQRRFFFDCDIEVQKEYKRDGVTLDVAKATETCEDCSPANFKKCMPLICGKALQLKSRKGDGMRYSLDTLISELRRESNRRYNIGNVLEALFQGPVCYKPLRIEVHEEEPAPSAISDLLQAVDSEEVREYCRSKGWIVEERVTELKLERNVNRALAVIQSVSLIAAVAGTIYIVYRLFSGMQGPYSGIGTNYATKKPVVRQVQTQGPLFDFGVSLLKKNIRTVKTGAGEFTALGVYDTVVVLPRHAMPGKTIEMNGKDIEVLDAYDLNDKTDTSLELTIVKLKMNEKFRDIRAMVPDQITDYNEAVVVVNTSYYPQLFTCVGRVKDYGFLNLAGRPTHRVLMYEFPTKAGQCGGVVISMGKIVGVHVGGNGAQGFAASLLRRYFTAEQGQIEYIEKSKDAGYPVINAPTQTKLEPSVFFDVFPGVKEPAVLHKKDKRLETNFEEALFSKYIGNVQRDMPEELLIAIDHYSEQLKMLNIDPRPISMEDAIYGTEGLEALDLGTSASYPYVAMGIKKRDILNKETRDVTKMQECIDKYGLNLPMVTYVKDELRAPDKIRKGKSRLIEASSLNDSVAMRCYFGNLYKVFHTNPGTISGCAVGCDPETFWSKIPVMMDGELFGFDYTAYDASLSPMWFHALAEVLRRIGFVECKHFIDQLCCSHHLYMDKHYYVVGGMPSGCSGTSIFNSMINNLIIRTLVLTVYKNIDLDDLKIIAYGDDVLASYPYEIDASLLAEAGKSFGLIMTPPDKSAEFVKLTWDNVTFLKRKFVRDARYPFLVHPVMDMSNIHESIRWTKDPRHTEDHVRSLCLLAWHCGEEEYNEFVTKIRSVPVGRALHLPSFKALERKWYDSF.

Gly2 carries N-myristoyl glycine; by host lipidation. Residues 2–1485 lie on the Cytoplasmic side of the membrane; it reads GAQLSRNTAG…NVNRALAVIQ (1484 aa). 2 amphipathic alpha-helix regions span residues 557 to 574 and 560 to 581; these read ILQN…DKQV and NDPG…LVAG. Catalysis depends on for protease 2A activity residues His861 and Asp879. Positions 896 and 898 each coordinate Zn(2+). Cys950 (for protease 2A activity) is an active-site residue. Zn(2+)-binding residues include Cys956 and His958. Residues 1090–1162 are membrane-binding; sequence SDNWMKKFTE…EHSSASQERQ (73 aa). Residues 1090–1228 are oligomerization; sequence SDNWMKKFTE…SPGTGQSLAT (139 aa). The interval 1111–1115 is RNA-binding; it reads AAKIS. One can recognise an SF3 helicase domain in the interval 1194–1352; it reads EKRVLGAMQF…YKRDGVTLDV (159 aa). 3 residues coordinate Zn(2+): Cys1359, Cys1370, and Cys1375. Residues 1359-1375 form a C4-type; degenerate zinc finger; that stretch reads CEDCSPANFKKCMPLIC. The segment at 1403–1410 is RNA-binding; it reads ESNRRYNI. The segment at 1414–1419 is oligomerization; that stretch reads LEALFQ. An intramembrane segment occupies 1486 to 1501; the sequence is SVSLIAAVAGTIYIVY. At 1502–2175 the chain is on the cytoplasmic side; it reads RLFSGMQGPY…ALERKWYDSF (674 aa). At Tyr1511 the chain carries O-(5'-phospho-RNA)-tyrosine. The Peptidase C3 domain occupies 1532–1710; that stretch reads GPLFDFGVSL…FAASLLRRYF (179 aa). Catalysis depends on for protease 3C activity residues His1571, Glu1602, and Cys1678. Positions 1941-2056 constitute a RdRp catalytic domain; sequence GELFGFDYTA…SYPYEIDASL (116 aa). 2 residues coordinate Mg(2+): Asp1947 and Asp2042.

Belongs to the picornaviruses polyprotein family. In terms of assembly, interacts with capsid protein VP1 and capsid protein VP3 to form heterotrimeric protomers. As to quaternary structure, interacts with capsid protein VP0, and capsid protein VP3 to form heterotrimeric protomers. Five protomers subsequently associate to form pentamers which serve as building blocks for the capsid. Interacts with capsid protein VP2, capsid protein VP3 and capsid protein VP4 following cleavage of capsid protein VP0. Interacts with capsid protein VP1 and capsid protein VP3 in the mature capsid. In terms of assembly, interacts with capsid protein VP0 and capsid protein VP1 to form heterotrimeric protomers. Five protomers subsequently associate to form pentamers which serve as building blocks for the capsid. Interacts with capsid protein VP4 in the mature capsid. Interacts with protein 2C; this interaction may be important for virion morphogenesis. As to quaternary structure, interacts with capsid protein VP1 and capsid protein VP3. Homodimer. In terms of assembly, homohexamer; forms a hexameric ring structure with 6-fold symmetry characteristic of AAA+ ATPases. Interacts (via N-terminus) with host RTN3 (via reticulon domain); this interaction is important for viral replication. Interacts with capsid protein VP3; this interaction may be important for virion morphogenesis. As to quaternary structure, interacts with protein 3CD. Homodimer. Interacts with host GBF1. Interacts (via GOLD domain) with host ACBD3 (via GOLD domain); this interaction allows the formation of a viral protein 3A/ACBD3 heterotetramer with a 2:2 stoichiometry, which will stimulate the recruitment of host PI4KB in order to synthesize PI4P at the viral RNA replication sites. In terms of assembly, interacts with RNA-directed RNA polymerase. As to quaternary structure, interacts with protein 3AB and with RNA-directed RNA polymerase. Interacts with Viral protein genome-linked and with protein 3CD. Mg(2+) serves as cofactor. Post-translationally, specific enzymatic cleavages in vivo by the viral proteases yield processing intermediates and the mature proteins. In terms of processing, myristoylation is required for the formation of pentamers during virus assembly. Further assembly of 12 pentamers and a molecule of genomic RNA generates the provirion. During virion maturation, immature virions are rendered infectious following cleavage of VP0 into VP4 and VP2. This maturation seems to be an autocatalytic event triggered by the presence of RNA in the capsid and it is followed by a conformational change infectious virion. Post-translationally, myristoylation is required during RNA encapsidation and formation of the mature virus particle. In terms of processing, VPg is uridylylated by the polymerase into VPg-pUpU. This acts as a nucleotide-peptide primer for the genomic RNA replication.

Its subcellular location is the virion. The protein localises to the host cytoplasm. The protein resides in the host cytoplasmic vesicle membrane. It localises to the host nucleus. It catalyses the reaction a ribonucleoside 5'-triphosphate + H2O = a ribonucleoside 5'-diphosphate + phosphate + H(+). It carries out the reaction Selective cleavage of Tyr-|-Gly bond in the picornavirus polyprotein.. The enzyme catalyses RNA(n) + a ribonucleoside 5'-triphosphate = RNA(n+1) + diphosphate. The catalysed reaction is Selective cleavage of Gln-|-Gly bond in the poliovirus polyprotein. In other picornavirus reactions Glu may be substituted for Gln, and Ser or Thr for Gly.. With respect to regulation, replication or transcription is subject to high level of random mutations by the nucleotide analog ribavirin. In terms of biological role, forms an icosahedral capsid of pseudo T=3 symmetry with capsid proteins VP2 and VP3. The capsid is 300 Angstroms in diameter, composed of 60 copies of each capsid protein and enclosing the viral positive strand RNA genome. Capsid protein VP1 mainly forms the vertices of the capsid. Capsid protein VP1 interacts with host cell receptor to provide virion attachment to target host cells. This attachment induces virion internalization. Tyrosine kinases are probably involved in the entry process. After binding to its receptor, the capsid undergoes conformational changes. Capsid protein VP1 N-terminus (that contains an amphipathic alpha-helix) and capsid protein VP4 are externalized. Together, they shape a pore in the host membrane through which viral genome is translocated to host cell cytoplasm. Forms an icosahedral capsid of pseudo T=3 symmetry with capsid proteins VP2 and VP3. The capsid is 300 Angstroms in diameter, composed of 60 copies of each capsid protein and enclosing the viral positive strand RNA genome. Functionally, lies on the inner surface of the capsid shell. After binding to the host receptor, the capsid undergoes conformational changes. Capsid protein VP4 is released, Capsid protein VP1 N-terminus is externalized, and together, they shape a pore in the host membrane through which the viral genome is translocated into the host cell cytoplasm. Its function is as follows. Component of immature procapsids, which is cleaved into capsid proteins VP4 and VP2 after maturation. Allows the capsid to remain inactive before the maturation step. In terms of biological role, cysteine protease that cleaves viral polyprotein and specific host proteins. It is responsible for the autocatalytic cleavage between the P1 and P2 regions, which is the first cleavage occurring in the polyprotein. Also cleaves the host translation initiation factor EIF4G1, in order to shut down the capped cellular mRNA translation. Inhibits the host nucleus-cytoplasm protein and RNA trafficking by cleaving host members of the nuclear pores. Counteracts stress granule formation probably by antagonizing its assembly or promoting its dissassembly. Plays an essential role in the virus replication cycle by acting as a viroporin. Creates a pore in the host endoplasmic reticulum and as a consequence releases Ca2+ in the cytoplasm of infected cell. In turn, high levels of cytoplasmic calcium may trigger membrane trafficking and transport of viral ER-associated proteins to viroplasms, sites of viral genome replication. Functionally, induces and associates with structural rearrangements of intracellular membranes. Displays RNA-binding, nucleotide binding and NTPase activities. May play a role in virion morphogenesis and viral RNA encapsidation by interacting with the capsid protein VP3. Its function is as follows. Localizes the viral replication complex to the surface of membranous vesicles. Together with protein 3CD binds the Cis-Active RNA Element (CRE) which is involved in RNA synthesis initiation. Acts as a cofactor to stimulate the activity of 3D polymerase, maybe through a nucleid acid chaperone activity. In terms of biological role, localizes the viral replication complex to the surface of membranous vesicles. It inhibits host cell endoplasmic reticulum-to-Golgi apparatus transport and causes the disassembly of the Golgi complex, possibly through GBF1 interaction. This would result in depletion of MHC, trail receptors and IFN receptors at the host cell surface. Plays an essential role in viral RNA replication by recruiting ACBD3 and PI4KB at the viral replication sites, thereby allowing the formation of the rearranged membranous structures where viral replication takes place. Acts as a primer for viral RNA replication and remains covalently bound to viral genomic RNA. VPg is uridylylated prior to priming replication into VPg-pUpU. The oriI viral genomic sequence may act as a template for this. The VPg-pUpU is then used as primer on the genomic RNA poly(A) by the RNA-dependent RNA polymerase to replicate the viral genome. During genome replication, the VPg-RNA linkage is removed by the host TDP2, thereby accelerating replication. During the late stage of the replication cycle, host TDP2 is excluded from sites of viral RNA synthesis and encapsidation, allowing for the generation of progeny virions. Functionally, involved in the viral replication complex and viral polypeptide maturation. It exhibits protease activity with a specificity and catalytic efficiency that is different from protease 3C. Protein 3CD lacks polymerase activity. Protein 3CD binds to the 5'UTR of the viral genome. Its function is as follows. Replicates the viral genomic RNA on the surface of intracellular membranes. May form linear arrays of subunits that propagate along a strong head-to-tail interaction called interface-I. Covalently attaches UMP to a tyrosine of VPg, which is used to prime RNA synthesis. The positive stranded RNA genome is first replicated at virus induced membranous vesicles, creating a dsRNA genomic replication form. This dsRNA is then used as template to synthesize positive stranded RNA genomes. ss(+)RNA genomes are either translated, replicated or encapsidated. In terms of biological role, major viral protease that mediates proteolytic processing of the polyprotein. Cleaves host EIF5B, contributing to host translation shutoff. Also cleaves host PABPC1, contributing to host translation shutoff. Cleaves host NLRP1, triggers host N-glycine-mediated degradation of the autoinhibitory NLRP1 N-terminal fragment. This Bos taurus (Bovine) protein is Genome polyprotein.